Reading from the N-terminus, the 461-residue chain is Porin AaxA (461 aa).

The N-terminal stretch at 1-22 (MSFRSVLLTALLSLSFTTTMQA) is a signal peptide.

It belongs to the OprB family.

Its subcellular location is the cell outer membrane. Facilitates L-arginine uptake, as part of the AaxABC system. The arginine uptake by the bacterium in the macrophage may be a virulence factor against the host innate immune response. This is Porin AaxA (aaxA) from Chlamydia trachomatis serovar L2 (strain ATCC VR-902B / DSM 19102 / 434/Bu).